We begin with the raw amino-acid sequence, 423 residues long: GTPase Obg (423 aa).

The region spanning 1 to 158 (MFIDTARIYI…MWVRLELKLL (158 aa)) is the Obg domain. The 171-residue stretch at 159–329 (ADVGLIGFPN…LLDKTIEILS (171 aa)) folds into the OBG-type G domain. Residues 165-172 (GFPNAGKS), 190-194 (FTTLT), 211-214 (DIPG), 281-284 (NKID), and 310-312 (SAL) each bind GTP. Mg(2+) is bound by residues S172 and T192. Residues 346–423 (TPPEEEETLN…VRDFEFEYYE (78 aa)) enclose the OCT domain.

The protein belongs to the TRAFAC class OBG-HflX-like GTPase superfamily. OBG GTPase family. As to quaternary structure, monomer. It depends on Mg(2+) as a cofactor.

The protein resides in the cytoplasm. In terms of biological role, an essential GTPase which binds GTP, GDP and possibly (p)ppGpp with moderate affinity, with high nucleotide exchange rates and a fairly low GTP hydrolysis rate. Plays a role in control of the cell cycle, stress response, ribosome biogenesis and in those bacteria that undergo differentiation, in morphogenesis control. In Thermoanaerobacter pseudethanolicus (strain ATCC 33223 / 39E) (Clostridium thermohydrosulfuricum), this protein is GTPase Obg.